The sequence spans 233 residues: Large ribosomal subunit protein uL1 (233 aa).

This sequence belongs to the universal ribosomal protein uL1 family. In terms of assembly, part of the 50S ribosomal subunit.

Binds directly to 23S rRNA. The L1 stalk is quite mobile in the ribosome, and is involved in E site tRNA release. Its function is as follows. Protein L1 is also a translational repressor protein, it controls the translation of the L11 operon by binding to its mRNA. This chain is Large ribosomal subunit protein uL1, found in Brucella suis (strain ATCC 23445 / NCTC 10510).